A 443-amino-acid chain; its full sequence is Chromosomal replication initiator protein DnaA (443 aa).

The segment at 1 to 67 is domain I, interacts with DnaA modulators; it reads MDAWSRSLER…RELLAHFAGF (67 aa). The domain II stretch occupies residues 67–105; it reads FSDVFLEIGSRPRPVEAQNAPFSTPSAHVSSEPQVPFAG. Positions 106–323 are domain III, AAA+ region; the sequence is NLDNHYTFAN…GALNTLTARA (218 aa). Residues Gly-151, Gly-153, Lys-154, and Thr-155 each coordinate ATP. The domain IV, binds dsDNA stretch occupies residues 324–443; that stretch reads NFTGRAITTE…WDKLIRKLSE (120 aa).

Belongs to the DnaA family. In terms of assembly, oligomerizes as a right-handed, spiral filament on DNA at oriC.

It localises to the cytoplasm. In terms of biological role, plays an essential role in the initiation and regulation of chromosomal replication. ATP-DnaA binds to the origin of replication (oriC) to initiate formation of the DNA replication initiation complex once per cell cycle. Binds the DnaA box (a 9 base pair repeat at the origin) and separates the double-stranded (ds)DNA. Forms a right-handed helical filament on oriC DNA; dsDNA binds to the exterior of the filament while single-stranded (ss)DNA is stabiized in the filament's interior. The ATP-DnaA-oriC complex binds and stabilizes one strand of the AT-rich DNA unwinding element (DUE), permitting loading of DNA polymerase. After initiation quickly degrades to an ADP-DnaA complex that is not apt for DNA replication. Binds acidic phospholipids. This chain is Chromosomal replication initiator protein DnaA, found in Stenotrophomonas maltophilia (strain R551-3).